We begin with the raw amino-acid sequence, 128 residues long: Hemoglobin subunit beta-1 (128 aa).

The region spanning 2 to 128 is the Globin domain; it reads HWTAEEKALV…VVDALSKGYH (127 aa). Residues histidine 51 and histidine 74 each coordinate heme b.

The protein belongs to the globin family. In terms of assembly, hb 1 is a heterotetramer of two alpha and two beta-1 chains. As to expression, red blood cells (at protein level).

Its function is as follows. Involved in oxygen transport from gills to the various peripheral tissues. The protein is Hemoglobin subunit beta-1 of Somniosus microcephalus (Greenland sleeper shark).